The sequence spans 484 residues: Poly(A) RNA polymerase GLD2 (484 aa).

Residues Ser62 and Ser69 each carry the phosphoserine modification. Residues 72-97 are disordered; the sequence is FRGRKRLSDEKNLPLDGKRQRFHSPH. The short motif at 76–92 is the Nuclear localization signal element; sequence KRLSDEKNLPLDGKRQR. Residues 77–90 are compositionally biased toward basic and acidic residues; it reads RLSDEKNLPLDGKR. Ser95 bears the Phosphoserine mark. Residues Asp213 and Asp215 each contribute to the Mg(2+) site. The PAP-associated domain maps to 386-440; the sequence is NLGDLLLGFLKYYATEFDWNSQMISVREAKAIPRPDGIEWRNKYICVEEPFDGTN.

It belongs to the DNA polymerase type-B-like family. GLD2 subfamily. As to quaternary structure, interacts with CPEB1, CPEB2, CPSF1 and PABPC1. Interacts with QKI isoform QKI7; promoting recruitment to miRNA miR-122 and miR-122 stabilization. The cofactor is Mg(2+). Mn(2+) serves as cofactor. As to expression, expressed in brain. Within brain, it is expressed in cerebellum, hippocampus and medulla.

The protein resides in the cytoplasm. Its subcellular location is the nucleus. The catalysed reaction is RNA(n) + ATP = RNA(n)-3'-adenine ribonucleotide + diphosphate. Its function is as follows. Cytoplasmic poly(A) RNA polymerase that adds successive AMP monomers to the 3'-end of specific RNAs, forming a poly(A) tail. In contrast to the canonical nuclear poly(A) RNA polymerase, it only adds poly(A) to selected cytoplasmic mRNAs. Does not play a role in replication-dependent histone mRNA degradation. Adds a single nucleotide to the 3' end of specific miRNAs, monoadenylation stabilizes and prolongs the activity of some but not all miRNAs. The protein is Poly(A) RNA polymerase GLD2 of Homo sapiens (Human).